The following is a 501-amino-acid chain: Putative lon protease homolog (501 aa).

Glycine 53–serine 60 lines the ATP pocket. Residues serine 481 to glutamate 494 are compositionally biased toward polar residues. The interval serine 481–methionine 501 is disordered.

Belongs to the peptidase S16 family.

In Methanothermobacter thermautotrophicus (strain ATCC 29096 / DSM 1053 / JCM 10044 / NBRC 100330 / Delta H) (Methanobacterium thermoautotrophicum), this protein is Putative lon protease homolog.